A 139-amino-acid chain; its full sequence is Large ribosomal subunit protein uL16 (139 aa).

Residues 1-16 (MLIPKRTKYRKQHRPV) show a composition bias toward basic residues. Positions 1-22 (MLIPKRTKYRKQHRPVRSGMSK) are disordered.

Belongs to the universal ribosomal protein uL16 family. Part of the 50S ribosomal subunit.

Its function is as follows. Binds 23S rRNA and is also seen to make contacts with the A and possibly P site tRNAs. This is Large ribosomal subunit protein uL16 from Bifidobacterium longum (strain DJO10A).